A 153-amino-acid chain; its full sequence is Aspartate carbamoyltransferase regulatory chain (153 aa).

The Zn(2+) site is built by cysteine 109, cysteine 114, cysteine 138, and cysteine 141.

The protein belongs to the PyrI family. In terms of assembly, contains catalytic and regulatory chains. Requires Zn(2+) as cofactor.

Involved in allosteric regulation of aspartate carbamoyltransferase. The polypeptide is Aspartate carbamoyltransferase regulatory chain (Nitrosopumilus maritimus (strain SCM1)).